We begin with the raw amino-acid sequence, 1046 residues long: Toluene efflux pump membrane transporter TtgE (1046 aa).

The next 12 membrane-spanning stretches (helical) occupy residues 10-30 (IFAWVLAIIAMLAGALSLTKM), 339-359 (SVVHTILEAVVLVFLVMFLFL), 370-390 (LAVPVVLLAAFALLPYFGISI), 392-412 (VLTMYAMVLAIGLLVDDAIVV), 440-460 (GALVGIGMVLSAVFVPMAFFG), 470-490 (FAVTIVICMSLSVLVALIFTP), 542-562 (LIFALITAGTGYLFTQIPKAF), 871-891 (APMLYALTVLIVFLCLAALYE), 895-915 (VPMSVILVVPLGIFGAVLATL), 927-947 (VGLMTTVGLSAKNAILIIEFA), 973-993 (IIMTSLAFTFGVLPMARATGA), and 1008-1028 (GMITATVLAVFFVPLFYVVVV).

It belongs to the resistance-nodulation-cell division (RND) (TC 2.A.6) family.

It is found in the cell inner membrane. Functionally, the inner membrane transporter component of an inducible organic solvent efflux pump. Involved in export of toluene and styrene but not of m-xylene, propylbenzene or ethylbenzene. Is not involved in antibiotic or AMP efflux. The chain is Toluene efflux pump membrane transporter TtgE (ttgE) from Pseudomonas putida (strain DOT-T1E).